Here is a 105-residue protein sequence, read N- to C-terminus: Transcriptional regulator SutA (105 aa).

The span at 1-37 shows a compositional bias: acidic residues; it reads MSEEELEQDELDGADEDDGEELAAADDGEADSSDGDE. Positions 1–105 are disordered; sequence MSEEELEQDE…PDSKYGSRPI (105 aa). Basic and acidic residues-rich tracts occupy residues 59–83 and 92–105; these read AKQKERDALAKAMEEFLSRGGKVQE and PPKKPDSKYGSRPI.

In terms of assembly, interacts with RNA polymerase.

In terms of biological role, causes widespread changes in gene expression, and plays a direct role in the regulation of genes encoding ribosomal components. Associates with chromosomal DNA through interaction with RNA polymerase. Contributes to biofilm formation and secondary metabolite production. Important during transitions to and from the survival state. The sequence is that of Transcriptional regulator SutA from Pseudomonas aeruginosa (strain UCBPP-PA14).